The sequence spans 82 residues: Endocuticle structural protein SgAbd-6 (82 aa).

Position 1 is a pyrrolidone carboxylic acid (Q1). In terms of domain architecture, Chitin-binding type R&amp;R spans 18–82 (LGQYTFGFKT…ENGFQPQYTQ (65 aa)).

Its function is as follows. Component of the abdominal endocuticle. The sequence is that of Endocuticle structural protein SgAbd-6 from Schistocerca gregaria (Desert locust).